The sequence spans 83 residues: Exodeoxyribonuclease 7 small subunit (83 aa).

It belongs to the XseB family. Heterooligomer composed of large and small subunits.

It localises to the cytoplasm. The catalysed reaction is Exonucleolytic cleavage in either 5'- to 3'- or 3'- to 5'-direction to yield nucleoside 5'-phosphates.. In terms of biological role, bidirectionally degrades single-stranded DNA into large acid-insoluble oligonucleotides, which are then degraded further into small acid-soluble oligonucleotides. The polypeptide is Exodeoxyribonuclease 7 small subunit (Moorella thermoacetica (strain ATCC 39073 / JCM 9320)).